The sequence spans 176 residues: NAD(P)H-quinone oxidoreductase subunit 6, chloroplastic (176 aa).

5 helical membrane-spanning segments follow: residues 10 to 30 (ILML…VLLT), 33 to 53 (IYSA…YFLL), 60 to 80 (VAQL…AVMF), 95 to 115 (IGDG…MTTI), and 152 to 172 (FYLP…GAIT).

Belongs to the complex I subunit 6 family. As to quaternary structure, NDH is composed of at least 16 different subunits, 5 of which are encoded in the nucleus.

The protein localises to the plastid. It localises to the chloroplast thylakoid membrane. It catalyses the reaction a plastoquinone + NADH + (n+1) H(+)(in) = a plastoquinol + NAD(+) + n H(+)(out). The enzyme catalyses a plastoquinone + NADPH + (n+1) H(+)(in) = a plastoquinol + NADP(+) + n H(+)(out). In terms of biological role, NDH shuttles electrons from NAD(P)H:plastoquinone, via FMN and iron-sulfur (Fe-S) centers, to quinones in the photosynthetic chain and possibly in a chloroplast respiratory chain. The immediate electron acceptor for the enzyme in this species is believed to be plastoquinone. Couples the redox reaction to proton translocation, and thus conserves the redox energy in a proton gradient. This chain is NAD(P)H-quinone oxidoreductase subunit 6, chloroplastic (ndhG), found in Lolium perenne (Perennial ryegrass).